We begin with the raw amino-acid sequence, 896 residues long: MYERAMLSKNFDHAANEQRIYAGWEHGGAFAANPASSATPFTIMIPPPNVTGSLHMGHALTFTLQDSLVRWRRMQGRDVLWQPGTDHAGIATQMVVERLLASEGSPGRREIGRDAFLDRVWRWKAESGGNITHQLRRLGASLDWGRERFTMDEGLSAAVRDVFVTLYRQGLIYRDRRLVNWDPQLQTAISDLEVESREVRGNLWHIRYPLEDGEGSIIVATTRPETMLGDSAVAVHPEDERYTALIGKCVILPLTGRRIPIVADTYSDPEKGTGAVKITPAHDFNDFAVGRRHDLPMPSIMDREGRITLAEITCTEATDIADPAFVTGLEGQERFAARKAIVARLEEMGFLETIETHTHHVPHGDRSGVPIEPLLTTQWFCNAAELAKPAVAAVESGDTRFVPKQWENTFFAWLRDIQPWCISRQLWWGHRIPAWYAPDGSVYVAATAEEAQAAYGGSETLTQDEDVLDTWFSSALWPFSTLGWPEDDSILSRYYPTDVLITGFDIIFFWVARMMMMGLHIQKQVPFRDVYIHGLVRDERGQKMSKSKGNVIDPLALIEAHGADPMRFAICLLAGPGRDIKLGPKRVEDASRFVTKLWNASVFCERNGVKPEPGFDPATVTLPLSRWILASADDAIRAATQALEAYRFDDYAATCYRFVWNTFCDWFVELAKPILLATDTPEAAEIKAVAAHVLGVVLRLLHPAMPYVTETLWDHFGYGPEFSLIRAPWPEVGVSDPAREAARQEIDWLVRLIGEVRTVRNEMNVPPSTLTPILLKDAVAETVARAERWRDQIARLARASSVTSLEGALPKGSAQAVLDEAILVIPLEGVIDLDAERTRLTRERDKARDEAAKVVRKLENADFVARAKPEVVEENRDRLAALEADIARLGAALERL.

A 'HIGH' region motif is present at residues 48-58; that stretch reads PNVTGSLHMGH. A 'KMSKS' region motif is present at residues 543–547; that stretch reads KMSKS. K546 contributes to the ATP binding site. Residues 830–896 are a coiled coil; that stretch reads VIDLDAERTR…ARLGAALERL (67 aa).

This sequence belongs to the class-I aminoacyl-tRNA synthetase family. ValS type 1 subfamily. In terms of assembly, monomer.

Its subcellular location is the cytoplasm. The catalysed reaction is tRNA(Val) + L-valine + ATP = L-valyl-tRNA(Val) + AMP + diphosphate. Its function is as follows. Catalyzes the attachment of valine to tRNA(Val). As ValRS can inadvertently accommodate and process structurally similar amino acids such as threonine, to avoid such errors, it has a 'posttransfer' editing activity that hydrolyzes mischarged Thr-tRNA(Val) in a tRNA-dependent manner. This chain is Valine--tRNA ligase, found in Granulibacter bethesdensis (strain ATCC BAA-1260 / CGDNIH1).